A 73-amino-acid chain; its full sequence is Aldehyde dehydrogenase (73 aa).

The protein belongs to the aldehyde dehydrogenase family.

The enzyme catalyses an aldehyde + NAD(+) + H2O = a carboxylate + NADH + 2 H(+). It participates in alcohol metabolism; ethanol degradation; acetate from ethanol: step 2/2. This chain is Aldehyde dehydrogenase, found in Geobacillus stearothermophilus (Bacillus stearothermophilus).